The sequence spans 192 residues: Xanthine phosphoribosyltransferase (192 aa).

Positions 20 and 27 each coordinate xanthine. Residue 128 to 132 coordinates 5-phospho-alpha-D-ribose 1-diphosphate; sequence ANGDA. K156 contributes to the xanthine binding site.

The protein belongs to the purine/pyrimidine phosphoribosyltransferase family. Xpt subfamily. As to quaternary structure, homodimer.

The protein resides in the cytoplasm. It catalyses the reaction XMP + diphosphate = xanthine + 5-phospho-alpha-D-ribose 1-diphosphate. It participates in purine metabolism; XMP biosynthesis via salvage pathway; XMP from xanthine: step 1/1. Its function is as follows. Converts the preformed base xanthine, a product of nucleic acid breakdown, to xanthosine 5'-monophosphate (XMP), so it can be reused for RNA or DNA synthesis. The sequence is that of Xanthine phosphoribosyltransferase from Staphylococcus aureus (strain JH1).